Here is a 137-residue protein sequence, read N- to C-terminus: MSNVVQARDNSQVFGVARIYASFNDTFVHVTDLSGKETIARVTGGMKVKADRDESSPYAAMLAAQDVAAKCKEVGITAVHVKIRATGGTRTKTPGPGGQAALRALARSGLRIGRIEDVTPVPSDSTRKKGGRRGRRL.

Ser2 is modified (N-acetylserine). Residues 117-137 (DVTPVPSDSTRKKGGRRGRRL) are disordered. Positions 128-137 (KKGGRRGRRL) are enriched in basic residues.

The protein belongs to the universal ribosomal protein uS11 family. Component of the small ribosomal subunit (SSU). Mature yeast ribosomes consist of a small (40S) and a large (60S) subunit. The 40S small subunit contains 1 molecule of ribosomal RNA (18S rRNA) and 33 different proteins (encoded by 57 genes). The large 60S subunit contains 3 rRNA molecules (25S, 5.8S and 5S rRNA) and 46 different proteins (encoded by 81 genes). uS11 interacts with eS1 forming part of the mRNA exit tunnel. uS11 interacts with snoRNA U3. uS11 interacts with MPP10. Component of the ribosomal small subunit (SSU) processome composed of at least 40 protein subunits and snoRNA U3. Post-translationally, N-terminally acetylated by acetyltransferase NatA.

It is found in the cytoplasm. It localises to the nucleus. The protein localises to the nucleolus. Component of the ribosome, a large ribonucleoprotein complex responsible for the synthesis of proteins in the cell. The small ribosomal subunit (SSU) binds messenger RNAs (mRNAs) and translates the encoded message by selecting cognate aminoacyl-transfer RNA (tRNA) molecules. The large subunit (LSU) contains the ribosomal catalytic site termed the peptidyl transferase center (PTC), which catalyzes the formation of peptide bonds, thereby polymerizing the amino acids delivered by tRNAs into a polypeptide chain. The nascent polypeptides leave the ribosome through a tunnel in the LSU and interact with protein factors that function in enzymatic processing, targeting, and the membrane insertion of nascent chains at the exit of the ribosomal tunnel. uS11 is involved in nucleolar processing of pre-18S ribosomal RNA and ribosome assembly. This is Small ribosomal subunit protein uS11A from Saccharomyces cerevisiae (strain ATCC 204508 / S288c) (Baker's yeast).